The following is a 282-amino-acid chain: Cytochrome c1 (282 aa).

The first 24 residues, 1 to 24 (MTIKLRFVASLALVFGLAAASVPA), serve as a signal peptide directing secretion. 4 residues coordinate heme c: cysteine 62, cysteine 65, histidine 66, and methionine 207. A helical membrane pass occupies residues 253 to 273 (WWVLGFLVIFTGLLVATKIVV).

As to quaternary structure, the main subunits of complex b-c1 are: cytochrome b, cytochrome c1 and the Rieske protein. In terms of processing, binds 1 heme c group covalently per subunit.

It localises to the cell membrane. Component of the ubiquinol-cytochrome c reductase complex (complex III or cytochrome b-c1 complex), which is a respiratory chain that generates an electrochemical potential coupled to ATP synthesis. c1 functions as an electron donor to cytochrome c. This Blastochloris viridis (Rhodopseudomonas viridis) protein is Cytochrome c1 (petC).